The chain runs to 565 residues: NAD-dependent malic enzyme (565 aa).

Y104 (proton donor) is an active-site residue. R157 serves as a coordination point for NAD(+). The active-site Proton acceptor is K175. A divalent metal cation-binding residues include E246, D247, and D270. NAD(+) is bound by residues D270 and N418.

The protein belongs to the malic enzymes family. Homotetramer. The cofactor is Mg(2+). Mn(2+) is required as a cofactor.

The enzyme catalyses (S)-malate + NAD(+) = pyruvate + CO2 + NADH. The catalysed reaction is oxaloacetate + H(+) = pyruvate + CO2. The polypeptide is NAD-dependent malic enzyme (Enterobacter sp. (strain 638)).